A 102-amino-acid polypeptide reads, in one-letter code: Caroteno-chlorophyll a-c-binding protein (102 aa).

The chlorophyll a site is built by glutamate 36 and histidine 39. Residues 78–98 (VLGLIKIVPAGLWGIMIFYAA) traverse the membrane as a helical segment.

This sequence belongs to the light-harvesting chlorophyll a/b-binding (LHC) protein family. As to quaternary structure, the LHC complex consists of chlorophyll a-b binding proteins. Binds at least 14 chlorophylls (8 Chl-a and 6 Chl-b) and carotenoids such as lutein and neoxanthin. serves as cofactor. Photoregulated by reversible phosphorylation of its threonine residues.

The protein resides in the plastid. The protein localises to the chloroplast thylakoid membrane. In terms of biological role, the light-harvesting complex (LHC) functions as a light receptor, it captures and delivers excitation energy to photosystems with which it is closely associated. The chain is Caroteno-chlorophyll a-c-binding protein from Amphidinium carterae (Dinoflagellate).